The sequence spans 661 residues: MSDDWDDEPIVDTRGARGGDWSDDEDTAKSFSGEAEGDGVGGSGGEGGGYQGGNRDVFGRIGGGRGGGAGGYRGGNRDGGGFHGGRREGERDFRGGEGGFRGGQGGSRGGQGGSRGGQGGFRGGEGGFRGRLYENEDGDERRGRLDREERGGERRGRLDREERGGERGERGDGGFARRRRNEDDINNNNNIVEDVERKREFYIPPEPSNDAIEIFSSGIASGIHFSKYNNIPVKVTGSDVPQPIQHFTSADLRDIIIDNVNKSGYKIPTPIQKCSIPVISSGRDLMACAQTGSGKTAAFLLPILSKLLEDPHELELGRPQVVIVSPTRELAIQIFNEARKFAFESYLKIGIVYGGTSFRHQNECITRGCHVVIATPGRLLDFVDRTFITFEDTRFVVLDEADRMLDMGFSEDMRRIMTHVTMRPEHQTLMFSATFPEEIQRMAGEFLKNYVFVAIGIVGGACSDVKQTIYEVNKYAKRSKLIEILSEQADGTIVFVETKRGADFLASFLSEKEFPTTSIHGDRLQSQREQALRDFKNGSMKVLIATSVASRGLDIKNIKHVINYDMPSKIDDYVHRIGRTGRVGNNGRATSFFDPEKDRAIAADLVKILEGSGQTVPDFLRTCGAGGDGGYSNQNFGGVDVRGRGNYVGDATNVEEEEQWD.

The span at 1 to 10 (MSDDWDDEPI) shows a compositional bias: acidic residues. The disordered stretch occupies residues 1 to 186 (MSDDWDDEPI…RRRRNEDDIN (186 aa)). Residue serine 22 is modified to Phosphoserine. Position 27 is a phosphothreonine (threonine 27). Gly residues-rich tracts occupy residues 38-52 (DGVG…GYQG) and 60-83 (RIGG…GGFH). Positions 85–95 (GRREGERDFRG) are enriched in basic and acidic residues. A run of 5 repeats spans residues 93 to 99 (FRGGEGG), 100 to 106 (FRGGQGG), 107 to 113 (SRGGQGG), 114 to 120 (SRGGQGG), and 121 to 127 (FRGGEGG). A 5 X 7 AA tandem repeats of [FS]-R-G-G-[EQ]-G-G region spans residues 93–127 (FRGGEGGFRGGQGGSRGGQGGSRGGQGGFRGGEGG). The span at 96 to 129 (GEGGFRGGQGGSRGGQGGSRGGQGGFRGGEGGFR) shows a compositional bias: gly residues. Basic and acidic residues predominate over residues 131–172 (RLYENEDGDERRGRLDREERGGERRGRLDREERGGERGERGD). The B30.2/SPRY domain-binding motif signature appears at 184 to 188 (DINNN). Residues 184-203 (DINNNNNIVEDVERKREFYI) are required for posterior localization in oocyte. The short motif at 245–273 (QHFTSADLRDIIIDNVNKSGYKIPTPIQK) is the Q motif element. Residues 276–453 (IPVISSGRDL…GEFLKNYVFV (178 aa)) enclose the Helicase ATP-binding domain. ATP is bound at residue 289–296 (AQTGSGKT). Residues 399-402 (DEAD) carry the DEAD box motif. The region spanning 477–624 (KRSKLIEILS…TVPDFLRTCG (148 aa)) is the Helicase C-terminal domain.

This sequence belongs to the DEAD box helicase family. DDX4/VASA subfamily. In terms of assembly, interacts with eIF5B and faf. Interacts with gus (via B30.2/SPRY domain) and Fsn (via B30.2/SPRY domain). Interacts with aub, me31B, eIF-4a and TER94. Interacts with piwi; this interaction is RNA independent. Interacts with Dcr-1 and Fmr1; these interactions occur in the polar granules. Mg(2+) is required as a cofactor. Post-translationally, ubiquitinated during oogenesis. Deubiquitinated by faf, which protects this protein from proteasome-mediated degradation. As to expression, abundantly expressed in the female germline. Gus and faf are required for vas expression in the posterior pole of the oocyte.

The protein resides in the cytoplasm. It localises to the perinuclear region. Its subcellular location is the cytoplasmic ribonucleoprotein granule. The enzyme catalyses ATP + H2O = ADP + phosphate + H(+). Functionally, involved in translational control mechanisms operating in early stages of oogenesis. Required maternally in many stages of oogenesis, including cystocyte differentiation, oocyte differentiation, and specification of anterior-posterior polarity in the developing cysts. Essential for the formation and/or structural integrity of perinuclear nuage particles during germ cell formation. Required for gus, Fsn and aub accumulation at the posterior pole of the embryo. Required for the localization of vas to the perinuclear region of nurse cells. May have a role in production of piwi-interacting RNA (piRNA). The sequence is that of ATP-dependent RNA helicase vasa from Drosophila melanogaster (Fruit fly).